The chain runs to 330 residues: Aspartate--ammonia ligase (330 aa).

The protein belongs to the class-II aminoacyl-tRNA synthetase family. AsnA subfamily.

It localises to the cytoplasm. It catalyses the reaction L-aspartate + NH4(+) + ATP = L-asparagine + AMP + diphosphate + H(+). It functions in the pathway amino-acid biosynthesis; L-asparagine biosynthesis; L-asparagine from L-aspartate (ammonia route): step 1/1. This chain is Aspartate--ammonia ligase, found in Escherichia coli O7:K1 (strain IAI39 / ExPEC).